Reading from the N-terminus, the 446-residue chain is Aspartokinase (446 aa).

Residues 250 to 294 enclose the RPE1 insert domain; it reads IPLVKSTYMEESALNTKHSTKIDIPEDASGSTYKLPIELALQNRY.

The protein belongs to the aspartokinase family.

It catalyses the reaction L-aspartate + ATP = 4-phospho-L-aspartate + ADP. The protein operates within amino-acid biosynthesis; L-lysine biosynthesis via DAP pathway; (S)-tetrahydrodipicolinate from L-aspartate: step 1/4. Its pathway is amino-acid biosynthesis; L-methionine biosynthesis via de novo pathway; L-homoserine from L-aspartate: step 1/3. It participates in amino-acid biosynthesis; L-threonine biosynthesis; L-threonine from L-aspartate: step 1/5. This Rickettsia prowazekii (strain Madrid E) protein is Aspartokinase (lysC).